We begin with the raw amino-acid sequence, 180 residues long: Protein SPMIP9 (180 aa).

Microtubule inner protein component of sperm flagellar doublet microtubules. In terms of tissue distribution, testis-specific. Detected in the germ cell lineage at all stages.

It localises to the nucleus. It is found in the cytoplasm. The protein localises to the cytoskeleton. Its subcellular location is the flagellum axoneme. Its function is as follows. Microtubule inner protein (MIP) part of the dynein-decorated doublet microtubules (DMTs) in flagella axoneme. This Homo sapiens (Human) protein is Protein SPMIP9.